The following is a 531-amino-acid chain: Inactive beta-amylase 4, chloroplastic (531 aa).

The transit peptide at 1 to 62 (MTETGVIGCG…KRGRFITKLR (62 aa)) directs the protein to the chloroplast.

Belongs to the glycosyl hydrolase 14 family. In terms of tissue distribution, preferentially expressed in vascular tissue of cotyledons, leaves, petioles, stems, petals, siliques and roots, particularly in phloem. Also present in root tip.

The protein resides in the plastid. It is found in the chloroplast. No alpha-1,4-glucan hydrolase activity, including beta-amylase, alpha-amylase, a-glucosidase or alpha-amyloglucosidase. However, facilitates or regulates starch breakdown, especially at night, by a mechanism involving direct interaction with starch or other alpha-1,4-glucan. The chain is Inactive beta-amylase 4, chloroplastic (BAM4) from Arabidopsis thaliana (Mouse-ear cress).